We begin with the raw amino-acid sequence, 111 residues long: Universal stress protein B (111 aa).

A run of 2 helical transmembrane segments spans residues 1–21 and 90–110; these read MIST…NMAR and FILT…LILW.

The protein belongs to the universal stress protein B family.

It localises to the cell inner membrane. The chain is Universal stress protein B from Yersinia enterocolitica serotype O:8 / biotype 1B (strain NCTC 13174 / 8081).